Here is a 303-residue protein sequence, read N- to C-terminus: Sporulation regulatory protein (303 aa).

The FtsK domain occupies 26-213 (TGRLRAGLRK…HRVNDKQTAE (188 aa)). 43-50 (GANHSGKS) contributes to the ATP binding site.

Functionally, involved in sporulation inhibition and pock formation. The sequence is that of Sporulation regulatory protein (spi) from Streptomyces azureus.